The primary structure comprises 194 residues: Large ribosomal subunit protein uL6x (194 aa).

Thr75 carries the post-translational modification Phosphothreonine.

It belongs to the universal ribosomal protein uL6 family.

In Arabidopsis thaliana (Mouse-ear cress), this protein is Large ribosomal subunit protein uL6x (RPL9D).